Reading from the N-terminus, the 327-residue chain is 7,8-didemethyl-8-hydroxy-5-deazariboflavin synthase (327 aa).

Residues 6–244 form the Radical SAM core domain; it reads ITFSRNVFLP…EEVAVQVAPN (239 aa). [4Fe-4S] cluster-binding residues include Cys-20, Cys-24, and Cys-27.

It belongs to the radical SAM superfamily. CofG family. As to quaternary structure, consists of two subunits, CofG and CofH. The cofactor is [4Fe-4S] cluster.

It carries out the reaction 5-amino-5-(4-hydroxybenzyl)-6-(D-ribitylimino)-5,6-dihydrouracil + S-adenosyl-L-methionine = 7,8-didemethyl-8-hydroxy-5-deazariboflavin + 5'-deoxyadenosine + L-methionine + NH4(+) + H(+). It participates in cofactor biosynthesis; coenzyme F0 biosynthesis. In terms of biological role, catalyzes the radical-mediated synthesis of 7,8-didemethyl-8-hydroxy-5-deazariboflavin from 5-amino-5-(4-hydroxybenzyl)-6-(D-ribitylimino)-5,6-dihydrouracil. In Methanosphaerula palustris (strain ATCC BAA-1556 / DSM 19958 / E1-9c), this protein is 7,8-didemethyl-8-hydroxy-5-deazariboflavin synthase.